Here is a 549-residue protein sequence, read N- to C-terminus: Carboxylesterase 1C (549 aa).

The signal sequence occupies residues 1-18 (MWLCALVWASLAVCPIWG). Asn-79 is a glycosylation site (N-linked (GlcNAc...) asparagine). Cys-87 and Cys-116 are oxidised to a cystine. Ser-221 functions as the Acyl-ester intermediate in the catalytic mechanism. A disulfide bridge links Cys-273 with Cys-284. N-linked (GlcNAc...) asparagine glycans are attached at residues Asn-274, Asn-275, and Asn-302. The Charge relay system role is filled by Glu-340. Residue Asn-375 is glycosylated (N-linked (GlcNAc...) asparagine). The Charge relay system role is filled by His-453. Position 471 is a phosphoserine (Ser-471). Residue Asn-476 is glycosylated (N-linked (GlcNAc...) asparagine). A Prevents secretion from ER motif is present at residues 546–549 (TEHT).

The protein belongs to the type-B carboxylesterase/lipase family.

The protein resides in the endoplasmic reticulum lumen. It catalyses the reaction a carboxylic ester + H2O = an alcohol + a carboxylate + H(+). Involved in the detoxification of xenobiotics and in the activation of ester and amide prodrugs. Involved in the extracellular metabolism of lung surfactant. This is Carboxylesterase 1C (Ces1c) from Rattus norvegicus (Rat).